Consider the following 550-residue polypeptide: CTP synthase (550 aa).

The segment at 1–270 is amidoligase domain; the sequence is MTKFVFVTGG…DRLICEELRL (270 aa). A CTP-binding site is contributed by S13. S13 serves as a coordination point for UTP. ATP is bound by residues 14-19 and D71; that span reads SLGKGI. Residues D71 and E144 each coordinate Mg(2+). CTP is bound by residues 151–153, 191–196, and K227; these read DIE and KTKPTQ. UTP contacts are provided by residues 191–196 and K227; that span reads KTKPTQ. The 253-residue stretch at 295–547 folds into the Glutamine amidotransferase type-1 domain; that stretch reads TIGMVGKYVD…VEAALAGQQR (253 aa). G356 serves as a coordination point for L-glutamine. Catalysis depends on C383, which acts as the Nucleophile; for glutamine hydrolysis. L-glutamine is bound by residues 384–387, E407, and R473; that span reads LGMQ. Residues H520 and E522 contribute to the active site.

This sequence belongs to the CTP synthase family. Homotetramer.

The enzyme catalyses UTP + L-glutamine + ATP + H2O = CTP + L-glutamate + ADP + phosphate + 2 H(+). It catalyses the reaction L-glutamine + H2O = L-glutamate + NH4(+). The catalysed reaction is UTP + NH4(+) + ATP = CTP + ADP + phosphate + 2 H(+). Its pathway is pyrimidine metabolism; CTP biosynthesis via de novo pathway; CTP from UDP: step 2/2. Allosterically activated by GTP, when glutamine is the substrate; GTP has no effect on the reaction when ammonia is the substrate. The allosteric effector GTP functions by stabilizing the protein conformation that binds the tetrahedral intermediate(s) formed during glutamine hydrolysis. Inhibited by the product CTP, via allosteric rather than competitive inhibition. Its function is as follows. Catalyzes the ATP-dependent amination of UTP to CTP with either L-glutamine or ammonia as the source of nitrogen. Regulates intracellular CTP levels through interactions with the four ribonucleotide triphosphates. This chain is CTP synthase, found in Cupriavidus pinatubonensis (strain JMP 134 / LMG 1197) (Cupriavidus necator (strain JMP 134)).